A 264-amino-acid chain; its full sequence is Thymidylate synthase (264 aa).

Arg21 contributes to the dUMP binding site. A (6R)-5,10-methylene-5,6,7,8-tetrahydrofolate-binding site is contributed by His51. 126–127 (RR) serves as a coordination point for dUMP. Cys146 serves as the catalytic Nucleophile. Residues 166–169 (RSCD), Asn177, and 207–209 (HLY) contribute to the dUMP site. Residue Asp169 coordinates (6R)-5,10-methylene-5,6,7,8-tetrahydrofolate. Ala263 lines the (6R)-5,10-methylene-5,6,7,8-tetrahydrofolate pocket.

The protein belongs to the thymidylate synthase family. Bacterial-type ThyA subfamily. In terms of assembly, homodimer.

It localises to the cytoplasm. It carries out the reaction dUMP + (6R)-5,10-methylene-5,6,7,8-tetrahydrofolate = 7,8-dihydrofolate + dTMP. It functions in the pathway pyrimidine metabolism; dTTP biosynthesis. Functionally, catalyzes the reductive methylation of 2'-deoxyuridine-5'-monophosphate (dUMP) to 2'-deoxythymidine-5'-monophosphate (dTMP) while utilizing 5,10-methylenetetrahydrofolate (mTHF) as the methyl donor and reductant in the reaction, yielding dihydrofolate (DHF) as a by-product. This enzymatic reaction provides an intracellular de novo source of dTMP, an essential precursor for DNA biosynthesis. The polypeptide is Thymidylate synthase (Serratia proteamaculans (strain 568)).